The sequence spans 508 residues: DNA-directed RNA polymerase subunit Rpo1C (508 aa).

A unknown region spans residues 1–123 (MASLLWRDTS…EIKEKYGENL (123 aa)). Positions 124 to 508 (SEDVQKVLDD…IYKGYPKTKK (385 aa)) are DNA-directed RNA polymerase subunit Rpo1C.

The protein belongs to the RNA polymerase beta' chain family. Part of the RNA polymerase complex.

It is found in the cytoplasm. It catalyses the reaction RNA(n) + a ribonucleoside 5'-triphosphate = RNA(n+1) + diphosphate. In terms of biological role, DNA-dependent RNA polymerase (RNAP) catalyzes the transcription of DNA into RNA using the four ribonucleoside triphosphates as substrates. Forms part of the jaw domain. The chain is DNA-directed RNA polymerase subunit Rpo1C from Thermoplasma acidophilum (strain ATCC 25905 / DSM 1728 / JCM 9062 / NBRC 15155 / AMRC-C165).